The following is a 601-amino-acid chain: MSDKQQFIRNFSIIAHIDHGKSTLADRLLEIGQVTNDRTKKDQILDSMDIERERGITIKANNATFDYLADDGNTYTMNLLDTPGHVDFTYEVSRSLKACEGVLLIVDASQGVEAQTLANLYLAMEQDLEILPVMNKIDLPAADVEKTKIQIEESLGLDSEKAVAISAKTGLNVKAVLEAITKEIPAPKGDPKGPLKALIYDSYFDPYMGVVIKIRVFDGSIKKGDRFLIMSTGKDFTVNEVGINRIALTPTDGLGAGEVGYLIAGIKKVSDAKTGDTITLFSNPTKESIPGYKEAKPMVFSGLYPINGEQFDELVDAIEKLKLNDAALIFEKESSVALGFGFRVGYLGLLHMEIVQERLEREFNLDLITTAPSVKYIIRKKSGEVEEIDNPSRFPEPITIESTEEPYVKATVITPNEYVGNIMALAMDKRGIQLDTVYLTQDKVQLTYELPLAELIFEFYDKLKSFTRGYASLDYEPSGYRISQLVKMDILVNGEPVDALSMIVHRTKAEQRGREIIEKLKDLIPRHQFMIPIQAAVGGKILARESISALRKNVTAKCYGGDITRKKKLLEKQKEGKKRMKQIGNVEIPQEAFLAVLKTNN.

The region spanning 6-188 (QFIRNFSIIA…AITKEIPAPK (183 aa)) is the tr-type G domain. Residues 18–23 (DHGKST) and 135–138 (NKID) contribute to the GTP site.

The protein belongs to the TRAFAC class translation factor GTPase superfamily. Classic translation factor GTPase family. LepA subfamily.

Its subcellular location is the cell inner membrane. It catalyses the reaction GTP + H2O = GDP + phosphate + H(+). Its function is as follows. Required for accurate and efficient protein synthesis under certain stress conditions. May act as a fidelity factor of the translation reaction, by catalyzing a one-codon backward translocation of tRNAs on improperly translocated ribosomes. Back-translocation proceeds from a post-translocation (POST) complex to a pre-translocation (PRE) complex, thus giving elongation factor G a second chance to translocate the tRNAs correctly. Binds to ribosomes in a GTP-dependent manner. The sequence is that of Elongation factor 4 from Leptospira borgpetersenii serovar Hardjo-bovis (strain JB197).